The chain runs to 382 residues: D-galactonate dehydratase (382 aa).

Mg(2+) is bound at residue Asp183. The Proton donor role is filled by His185. Mg(2+) contacts are provided by Glu209 and Glu235. His285 acts as the Proton acceptor in catalysis.

It belongs to the mandelate racemase/muconate lactonizing enzyme family. GalD subfamily. It depends on Mg(2+) as a cofactor.

It carries out the reaction D-galactonate = 2-dehydro-3-deoxy-D-galactonate + H2O. It functions in the pathway carbohydrate acid metabolism; D-galactonate degradation; D-glyceraldehyde 3-phosphate and pyruvate from D-galactonate: step 1/3. In terms of biological role, catalyzes the dehydration of D-galactonate to 2-keto-3-deoxy-D-galactonate. This is D-galactonate dehydratase from Variovorax paradoxus (strain S110).